The sequence spans 361 residues: L-threonine 3-dehydrogenase (361 aa).

Cysteine 38 contributes to the Zn(2+) binding site. Catalysis depends on charge relay system residues threonine 40 and histidine 43. Histidine 63, glutamate 64, cysteine 93, cysteine 96, cysteine 99, and cysteine 107 together coordinate Zn(2+). NAD(+) contacts are provided by residues isoleucine 175, aspartate 195, arginine 200, 262-264 (LGI), and 286-287 (IY).

It belongs to the zinc-containing alcohol dehydrogenase family. In terms of assembly, homotetramer. It depends on Zn(2+) as a cofactor.

The protein resides in the cytoplasm. It catalyses the reaction L-threonine + NAD(+) = (2S)-2-amino-3-oxobutanoate + NADH + H(+). Its pathway is amino-acid degradation; L-threonine degradation via oxydo-reductase pathway; glycine from L-threonine: step 1/2. Its function is as follows. Catalyzes the NAD(+)-dependent oxidation of L-threonine to 2-amino-3-ketobutyrate. The chain is L-threonine 3-dehydrogenase from Pectobacterium atrosepticum (strain SCRI 1043 / ATCC BAA-672) (Erwinia carotovora subsp. atroseptica).